The following is a 208-amino-acid chain: GTP cyclohydrolase 1 (208 aa).

Residues cysteine 89, histidine 92, and cysteine 163 each contribute to the Zn(2+) site.

The protein belongs to the GTP cyclohydrolase I family. Homomer.

The enzyme catalyses GTP + H2O = 7,8-dihydroneopterin 3'-triphosphate + formate + H(+). It participates in cofactor biosynthesis; 7,8-dihydroneopterin triphosphate biosynthesis; 7,8-dihydroneopterin triphosphate from GTP: step 1/1. This chain is GTP cyclohydrolase 1, found in Saccharolobus islandicus (strain Y.N.15.51 / Yellowstone #2) (Sulfolobus islandicus).